We begin with the raw amino-acid sequence, 158 residues long: 2-C-methyl-D-erythritol 2,4-cyclodiphosphate synthase (158 aa).

Asp9 and His11 together coordinate a divalent metal cation. 4-CDP-2-C-methyl-D-erythritol 2-phosphate-binding positions include 9–11 (DVH) and 35–36 (HS). His43 is an a divalent metal cation binding site. Residues 57–59 (DIG), 62–66 (FPDTD), 101–107 (AQRPKMA), 133–136 (TTTE), Phe140, and Arg143 each bind 4-CDP-2-C-methyl-D-erythritol 2-phosphate.

This sequence belongs to the IspF family. As to quaternary structure, homotrimer. Requires a divalent metal cation as cofactor.

The enzyme catalyses 4-CDP-2-C-methyl-D-erythritol 2-phosphate = 2-C-methyl-D-erythritol 2,4-cyclic diphosphate + CMP. The protein operates within isoprenoid biosynthesis; isopentenyl diphosphate biosynthesis via DXP pathway; isopentenyl diphosphate from 1-deoxy-D-xylulose 5-phosphate: step 4/6. In terms of biological role, involved in the biosynthesis of isopentenyl diphosphate (IPP) and dimethylallyl diphosphate (DMAPP), two major building blocks of isoprenoid compounds. Catalyzes the conversion of 4-diphosphocytidyl-2-C-methyl-D-erythritol 2-phosphate (CDP-ME2P) to 2-C-methyl-D-erythritol 2,4-cyclodiphosphate (ME-CPP) with a corresponding release of cytidine 5-monophosphate (CMP). The protein is 2-C-methyl-D-erythritol 2,4-cyclodiphosphate synthase of Lysinibacillus sphaericus (strain C3-41).